Consider the following 284-residue polypeptide: Rubber cis-polyprenyltransferase HRT2 (284 aa).

The active site involves D41.

This sequence belongs to the UPP synthase family. In terms of tissue distribution, predominantly expressed in latex.

The enzyme catalyses (cis-prenyl)(n)-diphosphate + isopentenyl diphosphate = (cis-prenyl)(n+1)-diphosphate + diphosphate. Its function is as follows. Proposed to be involved in rubber biosynthesis as a particle-bound rubber transferase responsible for the cis-1,4-polymerization of isoprene subunits. Probably requires additional factors for the production of high molecular mass rubber. The polypeptide is Rubber cis-polyprenyltransferase HRT2 (HRT2) (Hevea brasiliensis (Para rubber tree)).